The following is a 119-amino-acid chain: Secreted RxLR effector protein RXLR-C04 (119 aa).

The first 22 residues, 1–22 (MRLSYIFVVVATIITNCDIASA), serve as a signal peptide directing secretion. The RxLR-dEER motif lies at 40–77 (RILRQTNDSDDLEPIRHAMLDMELLEKIAKDPKYAEEV). A glycan (N-linked (GlcNAc...) asparagine) is linked at Asn46.

Belongs to the RxLR effector family.

Its subcellular location is the secreted. The protein resides in the host cytoplasm. The protein localises to the host nucleus. Functionally, secreted effector that suppresses pattern-triggered immunity (PTI) in plant host. The polypeptide is Secreted RxLR effector protein RXLR-C04 (Plasmopara halstedii (Downy mildew of sunflower)).